We begin with the raw amino-acid sequence, 431 residues long: Glutamyl-tRNA(Gln) amidotransferase subunit A (431 aa).

Residues K37 and S112 each act as charge relay system in the active site. The active-site Acyl-ester intermediate is the S136.

It belongs to the amidase family. GatA subfamily. Heterotrimer of A, B and C subunits.

The catalysed reaction is L-glutamyl-tRNA(Gln) + L-glutamine + ATP + H2O = L-glutaminyl-tRNA(Gln) + L-glutamate + ADP + phosphate + H(+). Allows the formation of correctly charged Gln-tRNA(Gln) through the transamidation of misacylated Glu-tRNA(Gln) in organisms which lack glutaminyl-tRNA synthetase. The reaction takes place in the presence of glutamine and ATP through an activated gamma-phospho-Glu-tRNA(Gln). The protein is Glutamyl-tRNA(Gln) amidotransferase subunit A of Methanospirillum hungatei JF-1 (strain ATCC 27890 / DSM 864 / NBRC 100397 / JF-1).